We begin with the raw amino-acid sequence, 539 residues long: Phosphoenolpyruvate carboxykinase (ATP) (539 aa).

3 residues coordinate substrate: Arg-61, Tyr-195, and Lys-201. ATP-binding positions include Lys-201, His-220, and 238-246 (GLSGTGKTT). Mn(2+)-binding residues include Lys-201 and His-220. Asp-259 contacts Mn(2+). The ATP site is built by Glu-287, Arg-325, and Thr-450. Arg-325 serves as a coordination point for substrate.

The protein belongs to the phosphoenolpyruvate carboxykinase (ATP) family. Mn(2+) is required as a cofactor.

The protein resides in the cytoplasm. The catalysed reaction is oxaloacetate + ATP = phosphoenolpyruvate + ADP + CO2. It functions in the pathway carbohydrate biosynthesis; gluconeogenesis. Functionally, involved in the gluconeogenesis. Catalyzes the conversion of oxaloacetate (OAA) to phosphoenolpyruvate (PEP) through direct phosphoryl transfer between the nucleoside triphosphate and OAA. The polypeptide is Phosphoenolpyruvate carboxykinase (ATP) (Methylobacterium radiotolerans (strain ATCC 27329 / DSM 1819 / JCM 2831 / NBRC 15690 / NCIMB 10815 / 0-1)).